Reading from the N-terminus, the 260-residue chain is Snake venom serine protease homolog 1 (260 aa).

An N-terminal signal peptide occupies residues 1–18 (MVLIRVLANLLILQLSYA). Positions 19-24 (QKSSEL) are excised as a propeptide. One can recognise a Peptidase S1 domain in the interval 25–251 (IIGGDECNIN…HLDWIKSIIA (227 aa)). Intrachain disulfides connect Cys-31/Cys-165, Cys-52/Cys-68, Cys-100/Cys-258, Cys-144/Cys-212, Cys-176/Cys-191, and Cys-202/Cys-227. N-linked (GlcNAc...) asparagine glycosylation is found at Asn-83, Asn-123, and Asn-124.

This sequence belongs to the peptidase S1 family. Snake venom subfamily. In terms of tissue distribution, expressed by the venom gland.

It localises to the secreted. Snake venom serine protease homolog that may act in the hemostasis system of the prey. This chain is Snake venom serine protease homolog 1, found in Trimeresurus stejnegeri (Chinese green tree viper).